The chain runs to 60 residues: Large ribosomal subunit protein uL30 (60 aa).

This sequence belongs to the universal ribosomal protein uL30 family. As to quaternary structure, part of the 50S ribosomal subunit.

The protein is Large ribosomal subunit protein uL30 of Salinispora arenicola (strain CNS-205).